The chain runs to 503 residues: Aromatase (503 aa).

Helical transmembrane passes span 19–39 (EAMPAATMPVLLLTGLFLLVW) and 303–323 (MLIAAPDTMSVSLFFMLFLIA). Positions 309 and 374 each coordinate substrate. Cys-437 lines the heme pocket.

Belongs to the cytochrome P450 family. The cofactor is heme. In terms of processing, phosphorylated in vitro by PKA and PKG/PRKG1. These phosphorylations inhibit the catalytic activity as measured by estrone synthesis from androstenedione (36% decrease for PKA and 30% for PKG/PRKG1). Widely expressed, including in adult and fetal brain, placenta, skin fibroblasts, adipose tissue and gonads.

The protein localises to the endoplasmic reticulum membrane. It is found in the microsome membrane. The enzyme catalyses testosterone + 3 reduced [NADPH--hemoprotein reductase] + 3 O2 = 17beta-estradiol + formate + 3 oxidized [NADPH--hemoprotein reductase] + 4 H2O + 4 H(+). It carries out the reaction androst-4-ene-3,17-dione + 3 reduced [NADPH--hemoprotein reductase] + 3 O2 = estrone + formate + 3 oxidized [NADPH--hemoprotein reductase] + 4 H2O + 4 H(+). The catalysed reaction is androst-4-ene-3,17-dione + reduced [NADPH--hemoprotein reductase] + O2 = 19-hydroxyandrost-4-ene-3,17-dione + oxidized [NADPH--hemoprotein reductase] + H2O + H(+). It catalyses the reaction 19-hydroxyandrost-4-ene-3,17-dione + reduced [NADPH--hemoprotein reductase] + O2 = 19-oxo-androst-4-ene-3,17-dione + oxidized [NADPH--hemoprotein reductase] + 2 H2O + H(+). The enzyme catalyses 19-oxo-androst-4-ene-3,17-dione + reduced [NADPH--hemoprotein reductase] + O2 = estrone + formate + oxidized [NADPH--hemoprotein reductase] + H2O + 2 H(+). It carries out the reaction estrone + reduced [NADPH--hemoprotein reductase] + O2 = 2-hydroxyestrone + oxidized [NADPH--hemoprotein reductase] + H2O + H(+). The catalysed reaction is 17beta-hydroxy-5alpha-androstan-3-one + reduced [NADPH--hemoprotein reductase] + O2 = 17beta,19-dihydroxy-3-oxo-5alpha-androstanone + oxidized [NADPH--hemoprotein reductase] + H2O + H(+). It catalyses the reaction 17beta,19-dihydroxy-3-oxo-5alpha-androstanone + reduced [NADPH--hemoprotein reductase] + O2 = 17beta-hydroxy-3,19-dioxo-5alpha-androstanone + oxidized [NADPH--hemoprotein reductase] + 2 H2O + H(+). The enzyme catalyses 17beta-hydroxy-3,19-dioxo-5alpha-androstanone + reduced [NADPH--hemoprotein reductase] + O2 = 17beta-hydroxy-3-oxo-19-nor-5alpha-androst-1-ene + formate + oxidized [NADPH--hemoprotein reductase] + H2O + 2 H(+). Its pathway is steroid hormone biosynthesis. Its function is as follows. A cytochrome P450 monooxygenase that catalyzes the conversion of C19 androgens, androst-4-ene-3,17-dione (androstenedione) and testosterone to the C18 estrogens, estrone and estradiol, respectively. Catalyzes three successive oxidations of C19 androgens: two conventional oxidations at C19 yielding 19-hydroxy and 19-oxo/19-aldehyde derivatives, followed by a third oxidative aromatization step that involves C1-beta hydrogen abstraction combined with cleavage of the C10-C19 bond to yield a phenolic A ring and formic acid. Alternatively, the third oxidative reaction yields a 19-norsteroid and formic acid. Converts dihydrotestosterone to delta1,10-dehydro 19-nordihydrotestosterone and may play a role in homeostasis of this potent androgen. Also displays 2-hydroxylase activity toward estrone. Mechanistically, uses molecular oxygen inserting one oxygen atom into a substrate, and reducing the second into a water molecule, with two electrons provided by NADPH via cytochrome P450 reductase (CPR; NADPH-ferrihemoprotein reductase). This Homo sapiens (Human) protein is Aromatase.